Consider the following 201-residue polypeptide: Large ribosomal subunit protein uL4 (201 aa).

The disordered stretch occupies residues 43 to 73; sequence SRGQKTRAEVTGSGKKPWRQKGTGRARSGSV.

It belongs to the universal ribosomal protein uL4 family. As to quaternary structure, part of the 50S ribosomal subunit.

Its function is as follows. One of the primary rRNA binding proteins, this protein initially binds near the 5'-end of the 23S rRNA. It is important during the early stages of 50S assembly. It makes multiple contacts with different domains of the 23S rRNA in the assembled 50S subunit and ribosome. Functionally, forms part of the polypeptide exit tunnel. The polypeptide is Large ribosomal subunit protein uL4 (Sodalis glossinidius (strain morsitans)).